The sequence spans 43 residues: Large ribosomal subunit protein uL11 (43 aa).

It belongs to the universal ribosomal protein uL11 family. As to quaternary structure, part of the ribosomal stalk of the 50S ribosomal subunit. Interacts with L10 and the large rRNA to form the base of the stalk. L10 forms an elongated spine to which L12 dimers bind in a sequential fashion forming a multimeric L10(L12)X complex. In terms of processing, one or more lysine residues are methylated.

Forms part of the ribosomal stalk which helps the ribosome interact with GTP-bound translation factors. In Streptomyces galbus, this protein is Large ribosomal subunit protein uL11 (rplK).